The following is a 715-amino-acid chain: MIYEGKAITVTALESGIVELKFDLKGESVNKFNRLTLNELRQAVDAIKADASVKGVIVSSGKDVFIVGADITEFVENFKLPDAELIAGNLEANKIFSDFEDLNVPTVAAINGIALGGGLEMCLAADFRVMADSAKIGLPEVKLGIYPGFGGTVRLPRLIGVDNAVEWIASGKENRAEDALKVSAVDAVVTADKLGAAALDLIKRAISGELDYKAKRQPKLEKLKLNAIEQMMAFETAKGFVAGQAGPNYPAPVEAIKTIQKAANFGRDKALEVEAAGFAKLAKTSASNCLIGLFLNDQELKKKAKVYDKIAKDVKQAAVLGAGIMGGGIAYQSASKGTPILMKDINEHGIEQGLAEAAKLLVGRVDKGRMTPAKMAEVLNGIRPTLSYGDFGNVDLVVEAVVENPKVKQAVLAEVENHVREDAILASNTSTISISLLAKALKRPENFVGMHFFNPVHMMPLVEVIRGEKSSDLAVATTVAYAKKMGKNPIVVNDCPGFLVNRVLFPYFGGFAKLVSAGVDFVRIDKVMEKFGWPMGPAYLMDVVGIDTGHHGRDVMAEGFPDRMKDDRRSAIDALYEAKRLGQKNGKGFYAYEADKKGKQKKLVDSSVLEVLKPIVYEQRDVTDEDIINWMMIPLCLETVRCLEDGIVETAAEADMGLVYGIGFPLFRGGALRYIDSIGVAEFVALADQYAELGALYHPTAKLREMAKNGQSFFG.

Positions 1 to 190 are enoyl-CoA hydratase/isomerase; that stretch reads MIYEGKAITV…KVSAVDAVVT (190 aa). Asp-297 is a substrate binding site. Residues 312–715 are 3-hydroxyacyl-CoA dehydrogenase; the sequence is KDVKQAAVLG…MAKNGQSFFG (404 aa). NAD(+) contacts are provided by residues Met-325, Asp-344, 401-403, Lys-408, and Ser-430; that span reads VVE. The For 3-hydroxyacyl-CoA dehydrogenase activity role is filled by His-451. An NAD(+)-binding site is contributed by Asn-454. Residues Asn-501 and Tyr-660 each coordinate substrate.

It in the N-terminal section; belongs to the enoyl-CoA hydratase/isomerase family. In the C-terminal section; belongs to the 3-hydroxyacyl-CoA dehydrogenase family. In terms of assembly, heterotetramer of two alpha chains (FadB) and two beta chains (FadA).

It carries out the reaction a (3S)-3-hydroxyacyl-CoA + NAD(+) = a 3-oxoacyl-CoA + NADH + H(+). It catalyses the reaction a (3S)-3-hydroxyacyl-CoA = a (2E)-enoyl-CoA + H2O. The enzyme catalyses a 4-saturated-(3S)-3-hydroxyacyl-CoA = a (3E)-enoyl-CoA + H2O. The catalysed reaction is (3S)-3-hydroxybutanoyl-CoA = (3R)-3-hydroxybutanoyl-CoA. It carries out the reaction a (3Z)-enoyl-CoA = a 4-saturated (2E)-enoyl-CoA. It catalyses the reaction a (3E)-enoyl-CoA = a 4-saturated (2E)-enoyl-CoA. It functions in the pathway lipid metabolism; fatty acid beta-oxidation. In terms of biological role, involved in the aerobic and anaerobic degradation of long-chain fatty acids via beta-oxidation cycle. Catalyzes the formation of 3-oxoacyl-CoA from enoyl-CoA via L-3-hydroxyacyl-CoA. It can also use D-3-hydroxyacyl-CoA and cis-3-enoyl-CoA as substrate. This chain is Fatty acid oxidation complex subunit alpha, found in Pseudomonas fragi.